Here is a 278-residue protein sequence, read N- to C-terminus: Probable NADP-dependent mannitol dehydrogenase (278 aa).

Residues isoleucine 45, asparagine 117, and lysine 152 each coordinate NADP(+). Active-site proton donor residues include serine 171 and tyrosine 186. Positions 186, 190, and 220 each coordinate NADP(+). Lysine 190 serves as the catalytic Lowers pKa of active site Tyr.

This sequence belongs to the short-chain dehydrogenases/reductases (SDR) family. As to quaternary structure, homotetramer.

It catalyses the reaction D-mannitol + NADP(+) = D-fructose + NADPH + H(+). Versatile oxidoreductase that catalyzes the oxidation and reduction of polar as well as non-polar substrates at a very broad pH range. Preferentially oxidizes secondary alcohols. Has highest activity for racemic 2-heptanol and racemic octanol. Is also an efficient reductase for selected substrates. Substrate selectivity was found for medium chain length ketones with the carbonyl function at position C-2. Has highest activities for ribulose and fructose. The enzyme is (R)-selective in the reduction direction and produces exclusively the (R)-enantiomer. This is Probable NADP-dependent mannitol dehydrogenase from Yarrowia lipolytica (strain CLIB 122 / E 150) (Yeast).